Reading from the N-terminus, the 1342-residue chain is DNA-directed RNA polymerase subunit beta (1342 aa).

Belongs to the RNA polymerase beta chain family. As to quaternary structure, the RNAP catalytic core consists of 2 alpha, 1 beta, 1 beta' and 1 omega subunit. When a sigma factor is associated with the core the holoenzyme is formed, which can initiate transcription.

It catalyses the reaction RNA(n) + a ribonucleoside 5'-triphosphate = RNA(n+1) + diphosphate. Functionally, DNA-dependent RNA polymerase catalyzes the transcription of DNA into RNA using the four ribonucleoside triphosphates as substrates. The sequence is that of DNA-directed RNA polymerase subunit beta from Salmonella choleraesuis (strain SC-B67).